The chain runs to 353 residues: Jasmonate-induced oxygenase 4 (353 aa).

The Fe2OG dioxygenase domain occupies 202 to 302 (VGASLRTNFY…RVSLAFFYNP (101 aa)). Arg-207 provides a ligand contact to jasmonate. Residues Asn-209 and Tyr-211 each coordinate 2-oxoglutarate. 3 residues coordinate Fe cation: His-226, Asp-228, and His-283. Residues Arg-293 and Ser-295 each contribute to the 2-oxoglutarate site. Residues Arg-332 and Arg-336 each coordinate jasmonate.

This sequence belongs to the iron/ascorbate-dependent oxidoreductase family. Requires L-ascorbate as cofactor. The cofactor is Fe(2+).

It carries out the reaction jasmonate + 2-oxoglutarate + O2 = (1R,2R)-12-hydroxyjasmonate + succinate + CO2. 2-oxoglutarate-dependent dioxygenase involved in the oxidation of jasmonate (JA), a stress-induced phytohormone synthesized in response to attack by pathogens and herbivores, which triggers the activation of defense responses via the JA-mediated signaling pathway. Converts JA to 12-hydroxyjasmonate (12OH-JA), an inactive form of JA. Is specific to free JA, and cannot oxidize the bioactive form jasmonoyl-L-isoleucine (JA-Ile) or other JA-amino acid conjugates. Prevents over-accumulation of JA and indirectly its bioactive form JA-Ile under stress response. Acts as a negative regulator of JA-mediated defense signaling, by contributing to 12OH-JA accumulation, which represses JA defense responses upon infection by the fungal pathogen Botrytis cinerea. Acts as a negative regulator of JA-mediated defense responses upon infestation by the herbivorous caterpillar Mamestra brassicae. The polypeptide is Jasmonate-induced oxygenase 4 (Arabidopsis thaliana (Mouse-ear cress)).